The chain runs to 450 residues: DNA primase DnaG (450 aa).

Positions 199 to 273 constitute a Toprim domain; that stretch reads DSIIVVEGRA…DVDYVARAPE (75 aa). Mg(2+) is bound by residues E205, D247, and D249. Basic and acidic residues predominate over residues 320 to 348; it reads APSKEVKPAPKHEPKPQPVEQKPREEKII. The disordered stretch occupies residues 320 to 350; the sequence is APSKEVKPAPKHEPKPQPVEQKPREEKIIRP.

The protein belongs to the archaeal DnaG primase family. In terms of assembly, forms a ternary complex with MCM helicase and DNA. Component of the archaeal exosome complex. Requires Mg(2+) as cofactor.

It catalyses the reaction ssDNA + n NTP = ssDNA/pppN(pN)n-1 hybrid + (n-1) diphosphate.. RNA polymerase that catalyzes the synthesis of short RNA molecules used as primers for DNA polymerase during DNA replication. Also part of the exosome, which is a complex involved in RNA degradation. Acts as a poly(A)-binding protein that enhances the interaction between heteromeric, adenine-rich transcripts and the exosome. This Thermococcus gammatolerans (strain DSM 15229 / JCM 11827 / EJ3) protein is DNA primase DnaG.